A 130-amino-acid chain; its full sequence is Chaperone protein SycT (130 aa).

In terms of assembly, binds to YopT.

Its function is as follows. Functions as a specific chaperone for YopT. The polypeptide is Chaperone protein SycT (sycT) (Yersinia enterocolitica).